Here is a 2058-residue protein sequence, read N- to C-terminus: Unconventional myosin-X (2058 aa).

At M1 the chain carries N-acetylmethionine. The Myosin motor domain occupies 63–739; it reads EGVDDMASLT…LEQKLEKRRE (677 aa). Residues N104, Y113, 160–165, and N215 contribute to the ATP site; that span reads GAGKTE. The actin-binding stretch occupies residues 619-641; that stretch reads LHSLMATLSSSNPFFVRCIKPNM. 3 consecutive IQ domains span residues 742 to 763, 764 to 787, and 788 to 817; these read VSHA…KQYR, KVLY…RFLH, and LKKA…EKRE. The tract at residues 814–883 is SAH; the sequence is EKREQEEKKK…LTRELEKQKE (70 aa). 2 disordered regions span residues 819–840 and 847–866; these read EEKK…RERE and ELRA…EALQ. Over residues 847–861 the composition is skewed to basic and acidic residues; the sequence is ELRAQQEEETRKQQE. Residues 884–934 are a coiled coil; it reads NKQVEEILRLEKEIEDLQRMKEQQELSLTEASLQKLQERRDQELRRLEEEA. Phosphoserine occurs at positions 962, 965, and 968. Residues 964-1090 are disordered; that stretch reads GSEFSSELAE…DLPSPDGDYD (127 aa). Acidic residues predominate over residues 989–1003; it reads PEEEVDEGFEADDDA. Residues 1040 to 1049 are compositionally biased toward polar residues; it reads VVPTSPSADS. A compositionally biased stretch (low complexity) spans 1060–1071; it reads SGSLHNSSSGES. Residue T1158 is modified to Phosphothreonine. 2 PH domains span residues 1212 to 1310 and 1392 to 1497; these read EALK…QVHA and EFIV…NVTD. One can recognise a MyTH4 domain in the interval 1547-1695; the sequence is LPYGDINLNL…PSRDEIEALI (149 aa). One can recognise an FERM domain in the interval 1700–2044; the sequence is MTSTVYCHGG…AYISMIVKKR (345 aa).

The protein belongs to the TRAFAC class myosin-kinesin ATPase superfamily. Myosin family. In terms of assembly, monomer, when in an inactive conformation in the cytosol. Homodimer in its active, membrane-bound conformation; antiparallel coiled coil-mediated dimer formation. Interacts strongly with CALM3 and weakly with CALM, the CALM3 interaction is essential for function in filopodial extension and motility. Interacts with ECPAS. Interacts with NEO1. Interacts with ITGB1 and ITGB3. Interacts with VASP. Interacts with DCC and ITGB5; the presence of DCC inhibits ITGB5 binding. Interacts with tubulin; ITGB5 or DCC binding inhibits tubulin binding. In terms of processing, the initiator methionine for isoform Headless is removed. In terms of tissue distribution, ubiquitous.

It localises to the cytoplasm. It is found in the cytosol. Its subcellular location is the cell projection. The protein localises to the lamellipodium. The protein resides in the ruffle. It localises to the cytoskeleton. It is found in the filopodium tip. Its subcellular location is the cell cortex. The protein localises to the filopodium membrane. Myosins are actin-based motor molecules with ATPase activity. Unconventional myosins serve in intracellular movements. MYO10 binds to actin filaments and actin bundles and functions as a plus end-directed motor. Moves with higher velocity and takes larger steps on actin bundles than on single actin filaments. The tail domain binds to membranous compartments containing phosphatidylinositol 3,4,5-trisphosphate or integrins, and mediates cargo transport along actin filaments. Regulates cell shape, cell spreading and cell adhesion. Stimulates the formation and elongation of filopodia. In hippocampal neurons it induces the formation of dendritic filopodia by trafficking the actin-remodeling protein VASP to the tips of filopodia, where it promotes actin elongation. Plays a role in formation of the podosome belt in osteoclasts. Its function is as follows. Functions as a dominant-negative regulator of isoform 1, suppressing its filopodia-inducing and axon outgrowth-promoting activities. In hippocampal neurons, it increases VASP retention in spine heads to induce spine formation and spine head expansion. The polypeptide is Unconventional myosin-X (MYO10) (Homo sapiens (Human)).